The primary structure comprises 340 residues: Thylakoidal processing peptidase 1, chloroplastic (340 aa).

A chloroplast-targeting transit peptide spans 1–52; the sequence is MAIRITFTYSTHVARNLVGTRVGPGGYCFESLVRPRFFSHKRDFDRSPRNRP. A helical membrane pass occupies residues 155–175; the sequence is EDAKAAFTAVTVSILFRSALA. The Lumenal, thylakoid segment spans residues 176 to 340; it reads EPKSIPSTSM…AITRGPVAVS (165 aa). S184 is a catalytic residue.

Belongs to the peptidase S26 family.

It is found in the plastid. It localises to the chloroplast thylakoid membrane. It catalyses the reaction Cleavage of hydrophobic, N-terminal signal or leader sequences from secreted and periplasmic proteins.. Functionally, cleaves the thylakoid-transfer domain from a chloroplast protein. The chain is Thylakoidal processing peptidase 1, chloroplastic (TPP1) from Arabidopsis thaliana (Mouse-ear cress).